Here is a 90-residue protein sequence, read N- to C-terminus: Protein A54 (90 aa).

The sequence is that of Protein A54 from Homo sapiens (Human).